The chain runs to 230 residues: Large ribosomal subunit protein uL1 (230 aa).

This sequence belongs to the universal ribosomal protein uL1 family. Part of the 50S ribosomal subunit.

Its function is as follows. Binds directly to 23S rRNA. The L1 stalk is quite mobile in the ribosome, and is involved in E site tRNA release. Protein L1 is also a translational repressor protein, it controls the translation of the L11 operon by binding to its mRNA. The sequence is that of Large ribosomal subunit protein uL1 from Leptospira borgpetersenii serovar Hardjo-bovis (strain L550).